Here is a 463-residue protein sequence, read N- to C-terminus: Cytochrome c-552 (463 aa).

An N-terminal signal peptide occupies residues 1 to 23 (MNVKSIALSAVIATSFLAAGAMA). Histidine 83 is a binding site for heme c. Heme contacts are provided by cysteine 111, cysteine 114, and lysine 115. Cysteine 149, cysteine 152, histidine 153, cysteine 191, cysteine 194, and histidine 195 together coordinate heme c. Glutamate 197, tyrosine 198, lysine 246, and glutamine 248 together coordinate Ca(2+). Tyrosine 198 contributes to the substrate binding site. Histidine 249 contributes to the substrate binding site. Heme c is bound by residues histidine 260, cysteine 267, cysteine 270, histidine 271, histidine 286, cysteine 299, cysteine 302, histidine 303, and histidine 378.

Belongs to the cytochrome c-552 family. Ca(2+) is required as a cofactor. Heme c serves as cofactor.

It is found in the periplasm. It carries out the reaction 6 Fe(III)-[cytochrome c] + NH4(+) + 2 H2O = 6 Fe(II)-[cytochrome c] + nitrite + 8 H(+). Its pathway is nitrogen metabolism; nitrate reduction (assimilation). Functionally, catalyzes the reduction of nitrite to ammonia, consuming six electrons in the process. In Shewanella frigidimarina (strain NCIMB 400), this protein is Cytochrome c-552.